The following is a 235-amino-acid chain: 2-C-methyl-D-erythritol 4-phosphate cytidylyltransferase (235 aa).

This sequence belongs to the IspD/TarI cytidylyltransferase family. IspD subfamily.

The catalysed reaction is 2-C-methyl-D-erythritol 4-phosphate + CTP + H(+) = 4-CDP-2-C-methyl-D-erythritol + diphosphate. The protein operates within isoprenoid biosynthesis; isopentenyl diphosphate biosynthesis via DXP pathway; isopentenyl diphosphate from 1-deoxy-D-xylulose 5-phosphate: step 2/6. In terms of biological role, catalyzes the formation of 4-diphosphocytidyl-2-C-methyl-D-erythritol from CTP and 2-C-methyl-D-erythritol 4-phosphate (MEP). The polypeptide is 2-C-methyl-D-erythritol 4-phosphate cytidylyltransferase (Mycolicibacterium paratuberculosis (strain ATCC BAA-968 / K-10) (Mycobacterium paratuberculosis)).